The following is a 511-amino-acid chain: MDVCSWKEMEVALVNFDNSDEIHEEPGYATDFDPTSSKGRPGSSPFSNWRVLISDNTNHETAFSKIPGEYVDPPGPEPVVLNEGNQRVIINIAGLRFETQLRTLNQFPETLLGDREKRMQFFDSMRNEYFFDRNRPSFDGILYYYQSGGKIRRPANVPIDVFADEISFYELGSEAMDQFREDEGFIKDPETLLPTNDFHRQFWLLFEYPESSSAARGVAVVSVLVVVISITIFCLETLPEFREDRELKVVRDPSINTNKTGLSQTMFTDPFFMVESTCIVWFTFELVLRFVVCPSKTDFFKNIMNIIDIISIIPYFATLITELVQETEPSAQQNMSLAILRIIRLVRVFRIFKLSRHSKGLQILGQTLKASMRELGLLIFFLFIGVILFSSAVYFAEVDEPESHFSSIPDGFWWAVVTMTTVGYGDMCPTTPGGKIVGTLCAIAGVLTIALPVPVIVSNFNYFYHRETENEEKPNIPGELDKILNSMGSRMGSTESLNKTNGSCSAEKSRK.

The segment at 25-44 (EPGYATDFDPTSSKGRPGSS) is disordered. The chain crosses the membrane as a helical span at residues 218-238 (VAVVSVLVVVISITIFCLETL). The chain crosses the membrane as a helical span at residues 271-292 (FFMVESTCIVWFTFELVLRFVV). C293 carries S-palmitoyl cysteine lipidation. The helical transmembrane segment at 303 to 323 (IMNIIDIISIIPYFATLITEL) threads the bilayer. A helical; Voltage-sensor transmembrane segment spans residues 339–358 (ILRIIRLVRVFRIFKLSRHS). A helical transmembrane segment spans residues 375-395 (LGLLIFFLFIGVILFSSAVYF). The short motif at 421 to 426 (TVGYGD) is the Selectivity filter element. Residues 436 to 456 (IVGTLCAIAGVLTIALPVPVI) traverse the membrane as a helical segment. Residues 489-511 (SRMGSTESLNKTNGSCSAEKSRK) are disordered.

Belongs to the potassium channel family. A (Shaker) (TC 1.A.1.2) subfamily. Kv1.8/KCNA10 sub-subfamily. Homotetramer. Interacts with KCN4B/POMP. Interaction with KCN4B/POMP is necessary for the modulation of channel activity by cAMP. As to expression, expressed strongly in the inner ear and weakly in skeletal muscle. Not detected in other tissues.

Its subcellular location is the membrane. The enzyme catalyses K(+)(in) = K(+)(out). The channel activity is up-regulated by cAMP. In terms of biological role, voltage-gated potassium ion channel that mediates K(+) permeability of excitable membranes. When opened in response to the voltage difference across the membrane, KCNA10 channel selectively allows the flow of potassium ions across the membrane down their electrochemical gradient. The sequence is that of Potassium voltage-gated channel subfamily A member 10 from Mus musculus (Mouse).